Consider the following 614-residue polypeptide: UPF0329 protein ECU03_0090 (614 aa).

2 stretches are compositionally biased toward basic and acidic residues: residues 317 to 338 (EREE…EESL) and 345 to 354 (LRMEEKEKSK). The interval 317 to 420 (EREEAEKMRG…KKSRSKGHRY (104 aa)) is disordered. Over residues 355–364 (SRGKKKKGGK) the composition is skewed to basic residues. Residues 372–381 (AKMEEEKKDS) are compositionally biased toward basic and acidic residues. Residues 382-394 (EEVEESAEAEVSL) are compositionally biased toward acidic residues. The segment covering 408–420 (SSKKKSRSKGHRY) has biased composition (basic residues).

The protein belongs to the UPF0329 family.

The chain is UPF0329 protein ECU03_0090 from Encephalitozoon cuniculi (strain GB-M1) (Microsporidian parasite).